Reading from the N-terminus, the 493-residue chain is MFKLALTLTLCLAGSLSLAQHNPHWWGNRNTIVHLFEWKWSDIAQECENFLGPRGFAGVQVSPVNENIISAGRPWWERYQPISYKLTTRSGNEEEFGDMVRRCNDVGVRIYVDVLLNHMSGDFDGVAVGTAGTEAEPGKKSFPGVPYSAQDFHPTCEITDWNDRFQVQQCELVGLKDLDQSSDWVRSKPIEFLDHLIELGVAGFRVDAAKHMASEDLEYIYSSLSNLNIDHGFPHNARPFIFQEVIDHGHETVSRDEYKDLGAVTEFRFSEEIGNAFRGNNALKWLQSWGTGWGFLPSGQALTFVDNHDNQRDAGAVLNYKSPKQYKMATAFHLAYPYGISRVMSSFAFDDHDTPPPQDAQERIISPEFDEDGACVNGWICEHRWRQIYAMVGFKNAVRDTEITGWWDNGDNQISFCRGNKGFLAINNNLYDLSQDLNTCLPQGTYCDVISGSLIDGSCTGKSVTVNEHGYGYIHIGSDDFDGVLALHVDAKV.

The first 19 residues, 1–19 (MFKLALTLTLCLAGSLSLA), serve as a signal peptide directing secretion. Q20 carries the pyrrolidone carboxylic acid modification. C47 and C103 are joined by a disulfide. Residues N117, Q168, and D177 each coordinate Ca(2+). A disulfide bridge connects residues C156 and C170. A chloride-binding site is contributed by R205. The active-site Nucleophile is the D207. Residue H211 coordinates Ca(2+). E244 serves as the catalytic Proton donor. Chloride contacts are provided by N307 and R342. Intrachain disulfides connect C375–C381, C417–C440, and C447–C459.

Belongs to the glycosyl hydrolase 13 family. As to quaternary structure, monomer. Requires Ca(2+) as cofactor. It depends on chloride as a cofactor.

It is found in the secreted. The catalysed reaction is Endohydrolysis of (1-&gt;4)-alpha-D-glucosidic linkages in polysaccharides containing three or more (1-&gt;4)-alpha-linked D-glucose units.. The sequence is that of Alpha-amylase-related protein (Amyrel) from Drosophila yakuba (Fruit fly).